A 577-amino-acid polypeptide reads, in one-letter code: Protein downstream neighbor of son homolog (577 aa).

Disordered stretches follow at residues 1–67 (MAEL…KRRN) and 328–382 (FTQP…LEEM). The span at 362-375 (ETDEVSDESDEDES) shows a compositional bias: acidic residues.

The protein belongs to the DONSON family. Component of the replisome complex.

Its subcellular location is the nucleus. In terms of biological role, replisome component that maintains genome stability by protecting stalled or damaged replication forks. After the induction of replication stress, required for the stabilization of stalled replication forks, the efficient activation of the intra-S-phase and G/2M cell-cycle checkpoints and the maintenance of genome stability. This chain is Protein downstream neighbor of son homolog, found in Xenopus tropicalis (Western clawed frog).